Here is a 331-residue protein sequence, read N- to C-terminus: Coiled-coil domain-containing protein 92 (331 aa).

2 coiled-coil regions span residues Met18–Thr44 and Asp76–Ala152. Over residues Ser171–Pro184 the composition is skewed to low complexity. The tract at residues Ser171–Ala212 is disordered. Over residues Pro193 to Arg203 the composition is skewed to basic and acidic residues. Position 209 is a phosphoserine (Ser209).

Interacts with CEP164. In terms of assembly, (Microbial infection) Interacts with ebolavirus protein NP; this interaction sequesters NP in the cytoplasm. Post-translationally, phosphorylated at Ser-209 by TTBK2.

It localises to the cytoplasm. The protein resides in the cytoskeleton. It is found in the microtubule organizing center. The protein localises to the centrosome. Its subcellular location is the centriole. In terms of biological role, interferon-stimulated protein that plays a role in innate immunity. Strongly inhibits ebolavirus transcription and replication. Forms a complex with viral RNA-bound nucleocapsid NP and thereby prevents the transport of NP to the cell surface. This Homo sapiens (Human) protein is Coiled-coil domain-containing protein 92 (CCDC92).